The chain runs to 391 residues: Processive diacylglycerol beta-glucosyltransferase (391 aa).

It belongs to the glycosyltransferase 28 family. UgtP subfamily.

It localises to the cell membrane. It catalyses the reaction a 1,2-diacyl-3-O-(beta-D-glucopyranosyl)-sn-glycerol + UDP-alpha-D-glucose = a 1,2-diacyl-3-O-(beta-D-Glc-(1-&gt;6)-beta-D-Glc)-sn-glycerol + UDP + H(+). The catalysed reaction is a 1,2-diacyl-sn-glycerol + UDP-alpha-D-glucose = a 1,2-diacyl-3-O-(beta-D-glucopyranosyl)-sn-glycerol + UDP + H(+). It functions in the pathway glycolipid metabolism; diglucosyl-diacylglycerol biosynthesis. In terms of biological role, processive glucosyltransferase involved in the biosynthesis of both the bilayer- and non-bilayer-forming membrane glucolipids. Is able to successively transfer two glucosyl residues to diacylglycerol (DAG), thereby catalyzing the formation of beta-monoglucosyl-DAG (3-O-(beta-D-glucopyranosyl)-1,2-diacyl-sn-glycerol) and beta-diglucosyl-DAG (3-O-(beta-D-glucopyranosyl-beta-(1-&gt;6)-D-glucopyranosyl)-1,2-diacyl-sn-glycerol). Beta-diglucosyl-DAG is the predominant glycolipid found in Bacillales and is also used as a membrane anchor for lipoteichoic acid (LTA). The protein is Processive diacylglycerol beta-glucosyltransferase of Staphylococcus haemolyticus (strain JCSC1435).